A 366-amino-acid polypeptide reads, in one-letter code: Spermine synthase (366 aa).

Residue Ala2 is modified to N-acetylalanine. Position 57 is a phosphoserine (Ser57). The PABS domain maps to 122 to 362 (RYWPTADGRL…ELWVFYTVWK (241 aa)). Residue Gln148 coordinates S-adenosyl 3-(methylsulfanyl)propylamine. Residues Tyr177 and Asp201 each contribute to the spermidine site. S-adenosyl 3-(methylsulfanyl)propylamine is bound by residues Glu220 and 255–256 (DC). The active-site Proton acceptor is Asp276. Positions 351 and 353 each coordinate spermidine.

It belongs to the spermidine/spermine synthase family. In terms of assembly, homodimer. Dimerization is mediated through the N-terminal domain and seems to be required for activity as deletion of the N-terminal domain causes complete loss of activity.

It carries out the reaction S-adenosyl 3-(methylsulfanyl)propylamine + spermidine = spermine + S-methyl-5'-thioadenosine + H(+). It functions in the pathway amine and polyamine biosynthesis; spermine biosynthesis; spermine from spermidine: step 1/1. Functionally, catalyzes the production of spermine from spermidine and decarboxylated S-adenosylmethionine (dcSAM). In Homo sapiens (Human), this protein is Spermine synthase.